The sequence spans 142 residues: Hemoglobin subunit alpha-2 (142 aa).

A Globin domain is found at 2-142 (VLSPADKTNV…VSTVLTSKYR (141 aa)). H59 is a binding site for O2. H88 serves as a coordination point for heme b.

Belongs to the globin family. Heterotetramer of two alpha chains and two beta chains. As to expression, red blood cells.

Functionally, involved in oxygen transport from the lung to the various peripheral tissues. The protein is Hemoglobin subunit alpha-2 of Arctocephalus galapagoensis (Galapagoes fur seal).